The following is a 169-amino-acid chain: NADH-quinone oxidoreductase subunit I (169 aa).

4Fe-4S ferredoxin-type domains are found at residues 60–90 (LRRY…IEAE) and 100–129 (TRYD…EGPN). Residues Cys70, Cys73, Cys76, Cys80, Cys109, Cys112, Cys115, and Cys119 each contribute to the [4Fe-4S] cluster site.

This sequence belongs to the complex I 23 kDa subunit family. As to quaternary structure, NDH-1 is composed of 14 different subunits. Subunits NuoA, H, J, K, L, M, N constitute the membrane sector of the complex. The cofactor is [4Fe-4S] cluster.

The protein localises to the cell membrane. It carries out the reaction a quinone + NADH + 5 H(+)(in) = a quinol + NAD(+) + 4 H(+)(out). Functionally, NDH-1 shuttles electrons from NADH, via FMN and iron-sulfur (Fe-S) centers, to quinones in the respiratory chain. The immediate electron acceptor for the enzyme in this species is believed to be ubiquinone. Couples the redox reaction to proton translocation (for every two electrons transferred, four hydrogen ions are translocated across the cytoplasmic membrane), and thus conserves the redox energy in a proton gradient. This chain is NADH-quinone oxidoreductase subunit I, found in Wolbachia pipientis wMel.